Consider the following 156-residue polypeptide: MNMNATLLGQAISFAMFVWFCMKYVWPPIMQAIEERQKKIADGLQAAERAAKDLDLAQANASSQLKEAKRTATEIIEQANKRKAQILDEAREDAQTERQKILAQAEAQLEAERNRARDELRKQVATLAVAGAEKILERSIDKDAHKDILDNITAKL.

Residues 7 to 29 (LLGQAISFAMFVWFCMKYVWPPI) traverse the membrane as a helical segment.

Belongs to the ATPase B chain family. F-type ATPases have 2 components, F(1) - the catalytic core - and F(0) - the membrane proton channel. F(1) has five subunits: alpha(3), beta(3), gamma(1), delta(1), epsilon(1). F(0) has three main subunits: a(1), b(2) and c(10-14). The alpha and beta chains form an alternating ring which encloses part of the gamma chain. F(1) is attached to F(0) by a central stalk formed by the gamma and epsilon chains, while a peripheral stalk is formed by the delta and b chains.

The protein resides in the cell inner membrane. F(1)F(0) ATP synthase produces ATP from ADP in the presence of a proton or sodium gradient. F-type ATPases consist of two structural domains, F(1) containing the extramembraneous catalytic core and F(0) containing the membrane proton channel, linked together by a central stalk and a peripheral stalk. During catalysis, ATP synthesis in the catalytic domain of F(1) is coupled via a rotary mechanism of the central stalk subunits to proton translocation. Its function is as follows. Component of the F(0) channel, it forms part of the peripheral stalk, linking F(1) to F(0). This Vibrio vulnificus (strain CMCP6) protein is ATP synthase subunit b.